The following is a 352-amino-acid chain: tRNA (guanine-N(1)-)-methyltransferase (352 aa).

S-adenosyl-L-methionine is bound by residues glycine 109 and 129–134 (IGDYVL).

Belongs to the RNA methyltransferase TrmD family. Homodimer.

The protein localises to the cytoplasm. It catalyses the reaction guanosine(37) in tRNA + S-adenosyl-L-methionine = N(1)-methylguanosine(37) in tRNA + S-adenosyl-L-homocysteine + H(+). Specifically methylates guanosine-37 in various tRNAs. This is tRNA (guanine-N(1)-)-methyltransferase from Chlamydia trachomatis serovar L2 (strain ATCC VR-902B / DSM 19102 / 434/Bu).